Here is a 444-residue protein sequence, read N- to C-terminus: Argininosuccinate synthase (444 aa).

Residues alanine 17 to serine 25 and alanine 43 each bind ATP. An L-citrulline-binding site is contributed by tyrosine 99. The ATP site is built by glycine 129 and threonine 131. L-aspartate-binding residues include threonine 131, asparagine 135, and aspartate 136. Position 135 (asparagine 135) interacts with L-citrulline. Aspartate 136 contacts ATP. Positions 139 and 192 each coordinate L-citrulline. Residue aspartate 194 participates in ATP binding. Threonine 201, glutamate 203, and glutamate 280 together coordinate L-citrulline.

The protein belongs to the argininosuccinate synthase family. Type 2 subfamily. In terms of assembly, homotetramer.

The protein localises to the cytoplasm. It catalyses the reaction L-citrulline + L-aspartate + ATP = 2-(N(omega)-L-arginino)succinate + AMP + diphosphate + H(+). It functions in the pathway amino-acid biosynthesis; L-arginine biosynthesis; L-arginine from L-ornithine and carbamoyl phosphate: step 2/3. This chain is Argininosuccinate synthase, found in Burkholderia lata (strain ATCC 17760 / DSM 23089 / LMG 22485 / NCIMB 9086 / R18194 / 383).